Reading from the N-terminus, the 557-residue chain is 2-isopropylmalate synthase (557 aa).

Positions 33–307 constitute a Pyruvate carboxyltransferase domain; the sequence is PIWCSSDLRD…DPQLDFSDID (275 aa). Residues aspartate 42, histidine 246, histidine 248, and asparagine 282 each coordinate Mg(2+). Residues 439–557 form a regulatory domain region; it reads ANAPYALVSH…SLSQQQAKAA (119 aa).

Belongs to the alpha-IPM synthase/homocitrate synthase family. LeuA type 2 subfamily. As to quaternary structure, homodimer. It depends on Mg(2+) as a cofactor.

It is found in the cytoplasm. The catalysed reaction is 3-methyl-2-oxobutanoate + acetyl-CoA + H2O = (2S)-2-isopropylmalate + CoA + H(+). Its pathway is amino-acid biosynthesis; L-leucine biosynthesis; L-leucine from 3-methyl-2-oxobutanoate: step 1/4. In terms of biological role, catalyzes the condensation of the acetyl group of acetyl-CoA with 3-methyl-2-oxobutanoate (2-ketoisovalerate) to form 3-carboxy-3-hydroxy-4-methylpentanoate (2-isopropylmalate). This is 2-isopropylmalate synthase from Pseudomonas entomophila (strain L48).